Here is a 104-residue protein sequence, read N- to C-terminus: MSQVRKNDHNLMKVLLGPVISEKATMVAEKNEQVVFQVARDANKSDVKQAVELLFKVQVDSVQIVNQKGKPKRYGRFEGRRDHTKKAYVNLKPGQEISFEAEAN.

The protein belongs to the universal ribosomal protein uL23 family. In terms of assembly, part of the 50S ribosomal subunit. Contacts protein L29, and trigger factor when it is bound to the ribosome.

One of the early assembly proteins it binds 23S rRNA. One of the proteins that surrounds the polypeptide exit tunnel on the outside of the ribosome. Forms the main docking site for trigger factor binding to the ribosome. The sequence is that of Large ribosomal subunit protein uL23 from Polynucleobacter necessarius subsp. necessarius (strain STIR1).